The sequence spans 354 residues: Selection and upkeep of intraepithelial T-cells protein 1 (354 aa).

Positions 23–141 (PSSEQFTVNS…EEAIAEVKVT (119 aa)) constitute an Ig-like V-type 1 domain. 2 disulfide bridges follow: Cys49-Cys123 and Cys163-Cys217. One can recognise an Ig-like C1-type 2 domain in the interval 161–233 (VECNSEGWFP…TGQEERTSIV (73 aa)). Transmembrane regions (helical) follow at residues 243-263 (SVWI…IMMP), 283-303 (LIGI…TITL), and 326-346 (MTVM…LVYF).

This sequence belongs to the SKINT family. As to expression, expressed in the thymus and skin.

The protein resides in the membrane. May act by engaging a cell surface molecule on immature T-cells in the embryonic thymus. The polypeptide is Selection and upkeep of intraepithelial T-cells protein 1 (SKINT1) (Macaca fascicularis (Crab-eating macaque)).